The primary structure comprises 232 residues: Lipoprotein-releasing system ATP-binding protein LolD 2 (232 aa).

Residues 11–231 (VYLHDIKRQY…SLQDGVVVEL (221 aa)) enclose the ABC transporter domain. 47–54 (APSGSGKS) is an ATP binding site.

Belongs to the ABC transporter superfamily. Lipoprotein translocase (TC 3.A.1.125) family. As to quaternary structure, the complex is composed of two ATP-binding proteins (LolD) and two transmembrane proteins (LolC and LolE).

It localises to the cell inner membrane. Functionally, part of the ABC transporter complex LolCDE involved in the translocation of mature outer membrane-directed lipoproteins, from the inner membrane to the periplasmic chaperone, LolA. Responsible for the formation of the LolA-lipoprotein complex in an ATP-dependent manner. The polypeptide is Lipoprotein-releasing system ATP-binding protein LolD 2 (Rhodopseudomonas palustris (strain ATCC BAA-98 / CGA009)).